We begin with the raw amino-acid sequence, 146 residues long: Angiogenin (146 aa).

The signal sequence occupies residues 1–24 (MVMGLGLFLLVFMLGLGLTPPTLA). Position 25 is a pyrrolidone carboxylic acid (Q25). The active-site Proton acceptor is H37. R45 lines the tRNA pocket. 3 cysteine pairs are disulfide-bonded: C50–C105, C63–C116, and C81–C131. Residues 55-59 (RRRGL) carry the Nucleolar localization signal motif. Positions 105 and 127 each coordinate tRNA. The Proton donor role is filled by H138.

The protein belongs to the pancreatic ribonuclease family. As to quaternary structure, homodimer. Interacts with RNH1; inhibiting ANG ribonuclease activity. Interacts with PCNA.

Its subcellular location is the secreted. It localises to the nucleus. The protein resides in the nucleolus. The protein localises to the cytoplasm. It is found in the stress granule. Its activity is regulated as follows. Has weak tRNA ribonuclease activity by itself due to partial autoinhibition by its C-terminus, which folds into a short alpha-helix that partially occludes the substrate-binding site. In absence of stress, the ribonuclease activity is inhibited by RNH1 in the cytoplasm. In response to stress, dissociates from RNH1 in the cytoplasm and associates with cytoplasmic ribosomes with vacant A-sites: ribosomes directly activate the tRNA ribonuclease activity of ANG by refolding the C-terminal alpha-helix. In response to stress, the angiogenic activity of ANG is inhibited by RNH1 in the nucleus. Its function is as follows. Secreted ribonuclease that can either promote or restrict cell proliferation of target cells, depending on the context. Endocytosed in target cells via its receptor PLXNB2 and translocates to the cytoplasm or nucleus. Under stress conditions, localizes to the cytoplasm and promotes the assembly of stress granules (SGs): specifically cleaves a subset of tRNAs within anticodon loops to produce tRNA-derived stress-induced fragments (tiRNAs), resulting in translation repression and inhibition of cell proliferation. tiRNas also prevent formation of apoptosome, thereby promoting cell survival. Preferentially cleaves RNAs between a pyrimidine and an adenosine residue, suggesting that it cleaves the anticodon loop of tRNA(Ala) (32-UUAGCAU-38) after positions 33 and 36. Cleaves a subset of tRNAs, including tRNA(Ala), tRNA(Glu), tRNA(Gly), tRNA(Lys), tRNA(Val), tRNA(His), tRNA(Asp) and tRNA(Sec). Under growth conditions and in differentiated cells, translocates to the nucleus and stimulates ribosomal RNA (rRNA) transcription, including that containing the initiation site sequences of 45S rRNA, thereby promoting cell growth and proliferation. Angiogenin induces vascularization of normal and malignant tissues via its ability to promote rRNA transcription. Involved in hematopoietic stem and progenitor cell (HSPC) growth and survival by promoting rRNA transcription in growth conditions and inhibiting translation in response to stress, respectively. Mediates the crosstalk between myeloid and intestinal epithelial cells to protect the intestinal epithelial barrier integrity: secreted by myeloid cells and promotes intestinal epithelial cells proliferation and survival. Also mediates osteoclast-endothelial cell crosstalk in growing bone: produced by osteoclasts and protects the neighboring vascular cells against senescence by promoting rRNA transcription. In Rhinopithecus avunculus (Tonkin snub-nosed monkey), this protein is Angiogenin (ANG).